We begin with the raw amino-acid sequence, 1143 residues long: Serine/threonine-protein kinase BRI1-like 2 (1143 aa).

An N-terminal signal peptide occupies residues 1 to 31 (MTTSPIRVRIRTRIQISFIFLLTHLSQSSSS). Residues 32–756 (DQSSLKTDSL…GTRAASWANS (725 aa)) are Extracellular-facing. Positions 68–75 (CQFSGVTC) match the Cys pair 1 motif. LRR repeat units lie at residues 77 to 101 (GGRVTEINLSGSGLSGIVSFNAFTS), 102 to 125 (LDSLSVLKLSENFFVLNSTSLLLL), 126 to 150 (PLTLTHLELSSSGLIGTLPENFFSK), 151 to 175 (YSNLISITLSYNNFTGKLPNDLFLS), 177 to 200 (KKLQTLDLSYNNITGPISGLTIPL), 203 to 227 (CVSMTYLDFSGNSISGYISDSLINC), 228 to 250 (TNLKSLNLSYNNFDGQIPKSFGE), 251 to 275 (LKLLQSLDLSHNRLTGWIPPEIGDT), 277 to 299 (RSLQNLRLSYNNFTGVIPESLSS), 300 to 324 (CSWLQSLDLSNNNISGPFPNTILRS), 326 to 349 (GSLQILLLSNNLISGDFPTSISAC), 351 to 373 (SLRIADFSSNRFSGVIPPDLCPG), 374 to 398 (AASLEELRLPDNLVTGEIPPAISQC), 399 to 422 (SELRTIDLSLNYLNGTIPPEIGNL), 424 to 446 (KLEQFIAWYNNIAGEIPPEIGKL), 447 to 470 (QNLKDLILNNNQLTGEIPPEFFNC), 472 to 493 (NIEWVSFTSNRLTGEVPKDFGI), 494 to 518 (LSRLAVLQLGNNNFTGEIPPELGKC), 520 to 542 (TLVWLDLNTNHLTGEIPPRLGRQ), 570 to 594 (VGGLVEFSGIRPERLLQIPSLKSCD), 610 to 634 (YQTIEYLDLSYNQLRGKIPDEIGEM), 635 to 660 (IALQVLELSHNQLSGEIPFTIGQLKN), 662 to 681 (GVFDASDNRLQGQIPESFSN), and 682 to 707 (LSFLVQIDLSNNELTGPIPQRGQLST). 2 N-linked (GlcNAc...) asparagine glycosylation sites follow: Asn84 and Asn118. N-linked (GlcNAc...) asparagine glycosylation is found at Asn163, Asn188, Asn226, and Asn234. N-linked (GlcNAc...) asparagine glycosylation is found at Asn288 and Asn312. Asn412 carries N-linked (GlcNAc...) asparagine glycosylation. N-linked (GlcNAc...) asparagine glycosylation occurs at Asn469. N-linked (GlcNAc...) asparagine glycosylation is present at Asn506. Asn681 carries an N-linked (GlcNAc...) asparagine glycan. The Cys pair 2 motif lies at 720–727 (CGVPLPEC). Residues 757 to 777 (IVLGVLISAASVCILIVWAIA) form a helical membrane-spanning segment. The Cytoplasmic segment spans residues 778-1143 (VRARRRDADD…NNSHSHSNSL (366 aa)). Thr835 bears the Phosphothreonine mark. The region spanning 838–1129 (FSAASMIGHG…LQVVASLREL (292 aa)) is the Protein kinase domain. ATP-binding positions include 844–852 (IGHGGFGEV) and Lys866. Tyr911 is modified (phosphotyrosine). The active-site Proton acceptor is the Asp966. Ser1001 carries the post-translational modification Phosphoserine. A Phosphotyrosine modification is found at Tyr1009.

It belongs to the protein kinase superfamily. Ser/Thr protein kinase family. In terms of assembly, interacts with TTL3. In terms of tissue distribution, expressed in provascular and procambial sites throughout plant development. Expressed throughout globe- to heart-staged embryos. Then, it is restricted to procambial cells by the late torpedo stage, and this pattern persists throughout the duration of embryo development. After germination, it is expressed not only in procambial cells throughout the plant but also in all lateral organ primordia before the onset of vascularization.

The protein localises to the cell membrane. The enzyme catalyses L-seryl-[protein] + ATP = O-phospho-L-seryl-[protein] + ADP + H(+). It carries out the reaction L-threonyl-[protein] + ATP = O-phospho-L-threonyl-[protein] + ADP + H(+). Functionally, receptor with a serine/threonine-protein kinase activity, which may transduce extracellular spatial and temporal signals into downstream cell differentiation responses in provascular and procambial cells. In contrast to BRI1, BRL1 and BRL3, it does not bind brassinolide. The polypeptide is Serine/threonine-protein kinase BRI1-like 2 (Arabidopsis thaliana (Mouse-ear cress)).